The primary structure comprises 209 residues: Uracil phosphoribosyltransferase (209 aa).

Residues Arg-77, Arg-102, and 129–137 (DPMLATGSS) contribute to the 5-phospho-alpha-D-ribose 1-diphosphate site. Uracil contacts are provided by residues Ile-192 and 197 to 199 (GDA). 5-phospho-alpha-D-ribose 1-diphosphate is bound at residue Asp-198.

Belongs to the UPRTase family. It depends on Mg(2+) as a cofactor.

The catalysed reaction is UMP + diphosphate = 5-phospho-alpha-D-ribose 1-diphosphate + uracil. It participates in pyrimidine metabolism; UMP biosynthesis via salvage pathway; UMP from uracil: step 1/1. Allosterically activated by GTP. Catalyzes the conversion of uracil and 5-phospho-alpha-D-ribose 1-diphosphate (PRPP) to UMP and diphosphate. The polypeptide is Uracil phosphoribosyltransferase (Metamycoplasma hominis (Mycoplasma hominis)).